The sequence spans 55 residues: Large ribosomal subunit protein bL33 (55 aa).

It belongs to the bacterial ribosomal protein bL33 family.

This is Large ribosomal subunit protein bL33 from Rhodopseudomonas palustris (strain HaA2).